The following is a 241-amino-acid chain: dTTP/UTP pyrophosphatase (241 aa).

Serine 38 is subject to Phosphoserine. Residue aspartate 105 is the Proton acceptor of the active site.

Belongs to the Maf family. YhdE subfamily. The cofactor is a divalent metal cation.

The protein resides in the cytoplasm. It is found in the nucleus. The enzyme catalyses dTTP + H2O = dTMP + diphosphate + H(+). It carries out the reaction UTP + H2O = UMP + diphosphate + H(+). Its function is as follows. Nucleoside triphosphate pyrophosphatase that hydrolyzes dTTP and UTP. May have a dual role in cell division arrest and in preventing the incorporation of modified nucleotides into cellular nucleic acids. The sequence is that of dTTP/UTP pyrophosphatase from Schizosaccharomyces pombe (strain 972 / ATCC 24843) (Fission yeast).